The primary structure comprises 351 residues: UDP-3-O-acylglucosamine N-acyltransferase (351 aa).

H257 functions as the Proton acceptor in the catalytic mechanism.

The protein belongs to the transferase hexapeptide repeat family. LpxD subfamily. In terms of assembly, homotrimer.

The catalysed reaction is a UDP-3-O-[(3R)-3-hydroxyacyl]-alpha-D-glucosamine + a (3R)-hydroxyacyl-[ACP] = a UDP-2-N,3-O-bis[(3R)-3-hydroxyacyl]-alpha-D-glucosamine + holo-[ACP] + H(+). The protein operates within bacterial outer membrane biogenesis; LPS lipid A biosynthesis. In terms of biological role, catalyzes the N-acylation of UDP-3-O-acylglucosamine using 3-hydroxyacyl-ACP as the acyl donor. Is involved in the biosynthesis of lipid A, a phosphorylated glycolipid that anchors the lipopolysaccharide to the outer membrane of the cell. The protein is UDP-3-O-acylglucosamine N-acyltransferase of Methylorubrum extorquens (strain PA1) (Methylobacterium extorquens).